The chain runs to 662 residues: MPPFYYRRRWYSNPWRRKRLRFRRRRLRRPIRKRFRRRRWVRRRRFFRFKRKLRKIRIDQWQPETIRKCHVKGNLCLLTCGRGNINHNYILTSESYVPTSEPGGGSWSILQMTTRVLYDEYKAARNWWTKSNSLLPLTKYIRCKLKFYRSDQTDYIVTIQRTGPFEVTLESYLSTQPSRHLMNHKAFIVPKLGRGPNKETYVKKIVRPPALFQSKWYFSQDIYNTPLFILTVSSCSLDQMYAPQDQISTNISLFSLNTNVFQINNWHKQPYTTKAASTLETYLYCYHNGHEPTQELKWKDIILLGNMTNYTDGKKYNTSGTTPLDLFKTENKPYWGNVFTNLNQDQDVIIYYGTKPKQDDNWTSTAPILPITSLYVECRYNPFKDKGTGNKVYLVPTDSGLGSFLTLPTKSELIITDLPLWLITWGWIEWLKKSRPVAHIEEEYQVVIQSKYIHPQLPCYVLIDKYFRHPPEGQHYITELSETDKLHWHPKYSMQTEQLELIAETGPAAPKINNTKQIEAHLNYDFLFKWGGSPAPMETITDPAEQEKFPSPSNQLQGLQIESPGKPKQYYLYTFDEKRSELTMPAAKRLKKDFTTPTFFTDFGTKDIPLKTQEETDQISEDEEIETSLPKEDHLKQQLQRTRQYYREGIRKLLKTKKLFPL.

Belongs to the anelloviridae capsid protein family.

It localises to the virion. In terms of biological role, self-assembles to form an icosahedral capsid with a T=1 symmetry, about 30 nm in diameter, and consisting of 60 capsid proteins. The capsid encapsulates the genomic DNA. Capsid protein is involved in attachment and entry into the host cell. The protein is Capsid protein of Homo sapiens (Human).